We begin with the raw amino-acid sequence, 455 residues long: Mycosin-4 (455 aa).

The signal sequence occupies residues 1-25 (MTTSRTLRLLVVSALATLSGLGTPV). One can recognise a Peptidase S8 domain in the interval 74–384 (SAQLADLDQV…NGTVDALAAV (311 aa)). Active-site charge relay system residues include aspartate 98, histidine 129, and serine 329. Residues 389–417 (IPQAGTATSDPAPVAVPVPRRSTPGPSDR) are disordered. The segment covering 394–412 (TATSDPAPVAVPVPRRSTP) has biased composition (low complexity). A helical membrane pass occupies residues 432-452 (LALMATLATASRRLRPGRNGI).

It belongs to the peptidase S8 family.

It localises to the cell membrane. The sequence is that of Mycosin-4 from Mycobacterium tuberculosis (strain ATCC 25618 / H37Rv).